A 1178-amino-acid polypeptide reads, in one-letter code: Dual specificity mitogen-activated protein kinase kinase hemipterous (1178 aa).

Disordered stretches follow at residues 74–103 (SGSG…SSSS) and 115–148 (ATGT…GGGL). Composition is skewed to low complexity over residues 91 to 103 (ATPF…SSSS) and 115 to 128 (ATGT…PPTT). The 260-residue stretch at 197-456 (LKHLGDLGNG…YPELLAQPFI (260 aa)) folds into the Protein kinase domain. ATP-binding positions include 203 to 211 (LGNGTSGNV) and lysine 226. Residue aspartate 320 is the Proton acceptor of the active site. A Phosphoserine modification is found at serine 348. Threonine 352 carries the phosphothreonine modification. The interval 522-648 (TYAGQSPTNP…DESPKKESMF (127 aa)) is disordered. Residues 523-543 (YAGQSPTNPQKTIKPTQIPSY) show a composition bias toward polar residues. Positions 544-570 (QQQQSQFFMQSATQLPQTTTTTPTATT) are enriched in low complexity. Residues 574-593 (GGSGNGNGRGNGSGGSGNGS) show a composition bias toward gly residues. Residues 594 to 608 (GSSSSASPLSPPSAG) are compositionally biased toward low complexity. Positions 636–646 (KYNDESPKKES) are enriched in basic and acidic residues. Residues serine 646 and serine 662 each carry the phosphoserine modification. Disordered stretches follow at residues 715-783 (TTTP…LQPG), 797-851 (QNQL…STCS), 912-933 (GTSP…GNGN), 999-1026 (TSPV…VVNN), 1042-1108 (SSSS…NRGQ), and 1122-1178 (GQPP…TIDQ). The segment covering 724–734 (TENSQAYDSCD) has biased composition (polar residues). 3 stretches are compositionally biased toward low complexity: residues 735–783 (SSSN…LQPG), 808–817 (RYQQQRQQPP), and 837–851 (THST…STCS). Over residues 912–928 (GTSPTLQSRSPEQQSDY) the composition is skewed to polar residues. The span at 1042 to 1055 (SSSSNTSQSTSPTT) shows a compositional bias: low complexity. A phosphoserine mark is found at serine 1150 and serine 1154. The segment covering 1168-1178 (PQRRIYRTIDQ) has biased composition (basic and acidic residues).

Belongs to the protein kinase superfamily. STE Ser/Thr protein kinase family. MAP kinase kinase subfamily. MAPKK is itself dependent on Ser/Thr phosphorylation for activity catalyzed by MAP kinase kinase kinases. In terms of processing, weakly autophosphorylated.

The catalysed reaction is L-seryl-[protein] + ATP = O-phospho-L-seryl-[protein] + ADP + H(+). The enzyme catalyses L-threonyl-[protein] + ATP = O-phospho-L-threonyl-[protein] + ADP + H(+). It catalyses the reaction L-tyrosyl-[protein] + ATP = O-phospho-L-tyrosyl-[protein] + ADP + H(+). Its function is as follows. Required for the epithelial cell sheet movement called dorsal closure (DC), which allows establishment of the dorsal epidermis. Controls the expression in the dorsal epithelium edges of another dorsal closure gene, puckered (puc). Phosphorylates and activates the MAP kinase bsk; bsk signal transduction pathway mediates an immune response and morphogenesis. In Drosophila melanogaster (Fruit fly), this protein is Dual specificity mitogen-activated protein kinase kinase hemipterous (hep).